Here is a 172-residue protein sequence, read N- to C-terminus: Photosystem I assembly protein Ycf3 (172 aa).

3 TPR repeats span residues 35 to 68 (AFSY…EVDA), 72 to 105 (SYIL…NPSL), and 120 to 153 (GEQA…APTN).

This sequence belongs to the Ycf3 family.

Its subcellular location is the plastid. It localises to the chloroplast thylakoid membrane. Its function is as follows. Essential for the assembly of the photosystem I (PSI) complex. May act as a chaperone-like factor to guide the assembly of the PSI subunits. This is Photosystem I assembly protein Ycf3 from Chlamydomonas reinhardtii (Chlamydomonas smithii).